The primary structure comprises 72 residues: Large ribosomal subunit protein uL29 (72 aa).

This sequence belongs to the universal ribosomal protein uL29 family.

The protein is Large ribosomal subunit protein uL29 (rpmC) of Chlamydia muridarum (strain MoPn / Nigg).